We begin with the raw amino-acid sequence, 212 residues long: Large ribosomal subunit protein uL3 (212 aa).

An N5-methylglutamine modification is found at Gln-153.

Belongs to the universal ribosomal protein uL3 family. As to quaternary structure, part of the 50S ribosomal subunit. Forms a cluster with proteins L14 and L19. Post-translationally, methylated by PrmB.

Functionally, one of the primary rRNA binding proteins, it binds directly near the 3'-end of the 23S rRNA, where it nucleates assembly of the 50S subunit. The sequence is that of Large ribosomal subunit protein uL3 from Marinobacter nauticus (strain ATCC 700491 / DSM 11845 / VT8) (Marinobacter aquaeolei).